The primary structure comprises 546 residues: Chaperonin GroEL (546 aa).

Residues 30–33 (TLGP), Lys51, 87–91 (DGTTT), Gly415, 479–481 (NAA), and Asp495 each bind ATP. The tract at residues 526 to 546 (KEEKPDLSGAGAGMGGMGGMM) is disordered. Gly residues predominate over residues 535–546 (AGAGMGGMGGMM).

The protein belongs to the chaperonin (HSP60) family. As to quaternary structure, forms a cylinder of 14 subunits composed of two heptameric rings stacked back-to-back. Interacts with the co-chaperonin GroES.

Its subcellular location is the cytoplasm. The enzyme catalyses ATP + H2O + a folded polypeptide = ADP + phosphate + an unfolded polypeptide.. In terms of biological role, together with its co-chaperonin GroES, plays an essential role in assisting protein folding. The GroEL-GroES system forms a nano-cage that allows encapsulation of the non-native substrate proteins and provides a physical environment optimized to promote and accelerate protein folding. The chain is Chaperonin GroEL from Wigglesworthia glossinidia brevipalpis.